The chain runs to 101 residues: UPF0235 protein MmarC6_1603 (101 aa).

This sequence belongs to the UPF0235 family.

This is UPF0235 protein MmarC6_1603 from Methanococcus maripaludis (strain C6 / ATCC BAA-1332).